The sequence spans 484 residues: Aspartyl/glutamyl-tRNA(Asn/Gln) amidotransferase subunit B (484 aa).

It belongs to the GatB/GatE family. GatB subfamily. As to quaternary structure, heterotrimer of A, B and C subunits.

It carries out the reaction L-glutamyl-tRNA(Gln) + L-glutamine + ATP + H2O = L-glutaminyl-tRNA(Gln) + L-glutamate + ADP + phosphate + H(+). The catalysed reaction is L-aspartyl-tRNA(Asn) + L-glutamine + ATP + H2O = L-asparaginyl-tRNA(Asn) + L-glutamate + ADP + phosphate + 2 H(+). In terms of biological role, allows the formation of correctly charged Asn-tRNA(Asn) or Gln-tRNA(Gln) through the transamidation of misacylated Asp-tRNA(Asn) or Glu-tRNA(Gln) in organisms which lack either or both of asparaginyl-tRNA or glutaminyl-tRNA synthetases. The reaction takes place in the presence of glutamine and ATP through an activated phospho-Asp-tRNA(Asn) or phospho-Glu-tRNA(Gln). The polypeptide is Aspartyl/glutamyl-tRNA(Asn/Gln) amidotransferase subunit B (Dechloromonas aromatica (strain RCB)).